An 84-amino-acid chain; its full sequence is Large ribosomal subunit protein bL27 (84 aa).

Residues 1-21 are disordered; the sequence is MAHKKGASSTRNGRDSNAQRL. The span at 7–19 shows a compositional bias: polar residues; that stretch reads ASSTRNGRDSNAQ.

Belongs to the bacterial ribosomal protein bL27 family.

The protein is Large ribosomal subunit protein bL27 of Clavibacter michiganensis subsp. michiganensis (strain NCPPB 382).